The following is a 165-amino-acid chain: Chorismate pyruvate-lyase (165 aa).

Substrate is bound by residues Met-35, Arg-77, Leu-115, and Glu-156.

It belongs to the UbiC family. Monomer.

The protein resides in the cytoplasm. It carries out the reaction chorismate = 4-hydroxybenzoate + pyruvate. Its pathway is cofactor biosynthesis; ubiquinone biosynthesis. Functionally, removes the pyruvyl group from chorismate, with concomitant aromatization of the ring, to provide 4-hydroxybenzoate (4HB) for the ubiquinone pathway. In Escherichia coli (strain K12 / MC4100 / BW2952), this protein is Chorismate pyruvate-lyase.